Reading from the N-terminus, the 828-residue chain is Glycerol-3-phosphate acyltransferase (828 aa).

The short motif at 310-315 (HRSHID) is the HXXXXD motif element.

Belongs to the GPAT/DAPAT family.

The protein localises to the cell inner membrane. It catalyses the reaction sn-glycerol 3-phosphate + an acyl-CoA = a 1-acyl-sn-glycero-3-phosphate + CoA. The protein operates within phospholipid metabolism; CDP-diacylglycerol biosynthesis; CDP-diacylglycerol from sn-glycerol 3-phosphate: step 1/3. In Pseudomonas putida (strain ATCC 47054 / DSM 6125 / CFBP 8728 / NCIMB 11950 / KT2440), this protein is Glycerol-3-phosphate acyltransferase.